A 384-amino-acid chain; its full sequence is Mitogen-activated protein kinase homolog 1 (384 aa).

Positions tyrosine 32 to methionine 319 constitute a Protein kinase domain. Residues isoleucine 38–valine 46 and lysine 61 each bind ATP. Aspartate 158 functions as the Proton acceptor in the catalytic mechanism. Threonine 191 carries the post-translational modification Phosphothreonine. The short motif at threonine 191 to tyrosine 193 is the TXY element. Position 193 is a phosphotyrosine (tyrosine 193).

It belongs to the protein kinase superfamily. CMGC Ser/Thr protein kinase family. MAP kinase subfamily. Mg(2+) serves as cofactor. In terms of processing, dually phosphorylated on Thr-191 and Tyr-193, which activates the enzyme. In terms of tissue distribution, expressed in vegetative organs such as leaf, root, or stem. In the reproductive organs, it is found in the ovary, but not in the stamen.

The catalysed reaction is L-seryl-[protein] + ATP = O-phospho-L-seryl-[protein] + ADP + H(+). The enzyme catalyses L-threonyl-[protein] + ATP = O-phospho-L-threonyl-[protein] + ADP + H(+). Its activity is regulated as follows. Activated by tyrosine and threonine phosphorylation. This chain is Mitogen-activated protein kinase homolog 1 (MPK1), found in Petunia hybrida (Petunia).